We begin with the raw amino-acid sequence, 63 residues long: Large ribosomal subunit protein bL28 (63 aa).

This sequence belongs to the bacterial ribosomal protein bL28 family.

The chain is Large ribosomal subunit protein bL28 from Dictyoglomus thermophilum (strain ATCC 35947 / DSM 3960 / H-6-12).